The chain runs to 517 residues: Maturase K (517 aa).

The protein belongs to the intron maturase 2 family. MatK subfamily.

The protein resides in the plastid. It localises to the chloroplast. In terms of biological role, usually encoded in the trnK tRNA gene intron. Probably assists in splicing its own and other chloroplast group II introns. In Trillium maculatum (Spotted wakerobin), this protein is Maturase K.